The chain runs to 165 residues: REP-associated tyrosine transposase (165 aa).

The protein belongs to the transposase 17 family. RAYT subfamily. Monomer.

Its activity is regulated as follows. Cleavage occurs in the presence of magnesium, but is much more pronounced with manganese. In terms of biological role, transposase that is always flanked by repeated extragenic palindrome (REP) sequences, which are clustered in structures called bacterial interspersed mosaic elements (BIMEs). RayT catalyzes cleavage and recombination of BIMEs. Binds REP sequences and cleaves BIMEs both upstream and downstream of the REP sequence. Could be important in the creation of BIME variability and amplification. The sequence is that of REP-associated tyrosine transposase from Escherichia coli (strain K12).